The chain runs to 113 residues: Class I hydrophobin POH3 (113 aa).

Residues 1–21 (MFSRVIFCTFLILPLLAAATA) form the signal peptide. 4 disulfide bridges follow: Cys32–Cys92, Cys39–Cys86, Cys40–Cys73, and Cys93–Cys106. The N-linked (GlcNAc...) asparagine glycan is linked to Asn110.

Belongs to the fungal hydrophobin family. Self-assembles to form functional amyloid fibrils called rodlets. Self-assembly into fibrillar rodlets occurs spontaneously at hydrophobic:hydrophilic interfaces and the rodlets further associate laterally to form amphipathic monolayers. In terms of tissue distribution, expressionn is switched off in the fruiting bodies but abundantly expressed in the vegetative mycelium of both monokaryon and dikaryon.

It localises to the secreted. The protein localises to the cell wall. Its function is as follows. Aerial growth, conidiation, and dispersal of filamentous fungi in the environment rely upon a capability of their secreting small amphipathic proteins called hydrophobins (HPBs) with low sequence identity. Class I can self-assemble into an outermost layer of rodlet bundles on aerial cell surfaces, conferring cellular hydrophobicity that supports fungal growth, development and dispersal; whereas Class II form highly ordered films at water-air interfaces through intermolecular interactions but contribute nothing to the rodlet structure. POH3 is a class I hydrophobin that causes a large drop in the water-surface tension, enabling hyphae to breach the interface and grow into the air, in both the primary and the secondary mycelium. In the latter mycelium POH3 maight also play a role in the emergence of fruiting bodies. Secreted POH3 could also play a role in facilitating lignin degradation. In Pleurotus ostreatus (Oyster mushroom), this protein is Class I hydrophobin POH3.